The chain runs to 630 residues: Pro-interleukin-16 (630 aa).

Disordered regions lie at residues 30 to 268 and 316 to 343; these read ENPG…FPLT and PKEG…ASDT. Residues 129–143 are compositionally biased toward low complexity; it reads IRASSSSSIKQRISS. Phosphoserine is present on serine 220. Positions 321–343 are enriched in polar residues; that stretch reads SPTSSSNEDSAANGSAETSASDT. The interaction with PPP1R12A, PPP1R12B and PPP1R12C stretch occupies residues 404–500; sequence KQLDSIHVTI…IVTRKLTAES (97 aa). 2 PDZ domains span residues 410 to 495 and 532 to 617; these read HVTI…VTRK and TVTL…IRRK.

As to quaternary structure, homotetramer. Pro-interleukin-16 interacts (via PDZ 2 domain) with PPP1R12A, PPP1R12B and PPP1R12C. Pro-interleukin-16 interacts with GRIN2A. Pro-interleukin-16 interacts with GABPB1. Pro-interleukin-16 interacts (via PDZ 3 domain) with HDAC3.

Its subcellular location is the secreted. The protein localises to the cytoplasm. It is found in the nucleus. Interleukin-16 stimulates a migratory response in CD4+ lymphocytes, monocytes, and eosinophils. Primes CD4+ T-cells for IL-2 and IL-15 responsiveness. Also induces T-lymphocyte expression of interleukin 2 receptor. Ligand for CD4. Functionally, pro-interleukin-16 is involved in cell cycle progression in T-cells. Appears to be involved in transcriptional regulation of SKP2 and is probably part of a transcriptional repression complex on the core promoter of the SKP2 gene. May act as a scaffold for GABPB1 (the DNA-binding subunit the GABP transcription factor complex) and HDAC3 thus maintaining transcriptional repression and blocking cell cycle progression in resting T-cells. This Macaca fascicularis (Crab-eating macaque) protein is Pro-interleukin-16 (IL16).